We begin with the raw amino-acid sequence, 258 residues long: Imidazole glycerol phosphate synthase subunit HisF (258 aa).

Catalysis depends on residues aspartate 12 and aspartate 131.

This sequence belongs to the HisA/HisF family. In terms of assembly, heterodimer of HisH and HisF.

Its subcellular location is the cytoplasm. It carries out the reaction 5-[(5-phospho-1-deoxy-D-ribulos-1-ylimino)methylamino]-1-(5-phospho-beta-D-ribosyl)imidazole-4-carboxamide + L-glutamine = D-erythro-1-(imidazol-4-yl)glycerol 3-phosphate + 5-amino-1-(5-phospho-beta-D-ribosyl)imidazole-4-carboxamide + L-glutamate + H(+). Its pathway is amino-acid biosynthesis; L-histidine biosynthesis; L-histidine from 5-phospho-alpha-D-ribose 1-diphosphate: step 5/9. In terms of biological role, IGPS catalyzes the conversion of PRFAR and glutamine to IGP, AICAR and glutamate. The HisF subunit catalyzes the cyclization activity that produces IGP and AICAR from PRFAR using the ammonia provided by the HisH subunit. The protein is Imidazole glycerol phosphate synthase subunit HisF of Nitrosomonas eutropha (strain DSM 101675 / C91 / Nm57).